Reading from the N-terminus, the 205-residue chain is Probable GTP-binding protein EngB (205 aa).

An EngB-type G domain is found at 25-199 (NGIEIAFIGY…KLSLNSSYKK (175 aa)). GTP contacts are provided by residues 33 to 40 (GYSNTGKS), 60 to 64 (GRTQL), 78 to 81 (DLPG), 145 to 148 (TKCD), and 178 to 180 (FSS). Mg(2+) contacts are provided by serine 40 and threonine 62.

Belongs to the TRAFAC class TrmE-Era-EngA-EngB-Septin-like GTPase superfamily. EngB GTPase family. The cofactor is Mg(2+).

Necessary for normal cell division and for the maintenance of normal septation. The chain is Probable GTP-binding protein EngB from Buchnera aphidicola subsp. Acyrthosiphon pisum (strain 5A).